Reading from the N-terminus, the 443-residue chain is MAKFEDKVDLYDDRGNLVEEQVPLEALSPLRNPAIKSIVQGIKRTVAVNLEGIENALKTAKVGGPACKIMGRELDLDIVGNAESIAAAAKEMIQVTEDDDTNVELLGGGKRALVQVPSARFDVAAEYSAAPLVTATAFVQAIINEFDVSMYDANMVKAAVLGRYPQSVEYMGANIATMLDIPQKLEGPGYALRNIMVNHVVAATLKNTLQAAALSTILEQTAMFEMGDAVGAFERMHLLGLAYQGMNADNLVFDLVKANGKEGTVGSVIADLVERALEDGVIKVEKELTDYKVYGTDDLAMWNAYAAAGLMAATMVNQGAARAAQGVSSTLLYYNDLIEFETGLPSVDFGKVEGTAVGFSFFSHSIYGGGGPGIFNGNHIVTRHSKGFAIPCVAAAMALDAGTQMFSPEATSGLIKEVFSQVDEFREPLKYVVEAAAEIKNEI.

Position 367 (tyrosine 367) interacts with coenzyme M. Glycine 369 lines the coenzyme B pocket.

Belongs to the methyl-coenzyme M reductase beta subunit family. MCR is a hexamer of two alpha, two beta, and two gamma chains, forming a dimer of heterotrimers. The cofactor is coenzyme F430.

It localises to the cytoplasm. The catalysed reaction is coenzyme B + methyl-coenzyme M = methane + coenzyme M-coenzyme B heterodisulfide. It functions in the pathway one-carbon metabolism; methyl-coenzyme M reduction; methane from methyl-coenzyme M: step 1/1. Its activity is regulated as follows. Methyl-coenzyme M reductase activity is inhibited by 3-nitrooxypropanol (3-NOP) in vitro and in vivo, by oxidation of its active site Ni(I), which stops both growth and methanogenesis. Is also inhibited by the reaction product CoM-S-S-CoB. Component of the methyl-coenzyme M reductase (MCR) I that catalyzes the reductive cleavage of methyl-coenzyme M (CoM-S-CH3 or 2-(methylthio)ethanesulfonate) using coenzyme B (CoB or 7-mercaptoheptanoylthreonine phosphate) as reductant which results in the production of methane and the mixed heterodisulfide of CoB and CoM (CoM-S-S-CoB). This is the final step in methanogenesis. Neither N-6-mercaptohexanoylthreonine phosphate (H-S-HxoTP) nor N-8-mercaptooctanoylthreonine phosphate (H-SOcoTP) nor any other thiol compound such as CoA or CoM can substitute for CoB as the electron donor. The polypeptide is Methyl-coenzyme M reductase I subunit beta (mcrB) (Methanothermobacter marburgensis (strain ATCC BAA-927 / DSM 2133 / JCM 14651 / NBRC 100331 / OCM 82 / Marburg) (Methanobacterium thermoautotrophicum)).